A 123-amino-acid polypeptide reads, in one-letter code: Small ribosomal subunit protein uS12 (123 aa).

The interval 1 to 28 is disordered; the sequence is MPTIQQLIRKPRQPKVKRSKSQHLEQCP. Positions 9-21 are enriched in basic residues; the sequence is RKPRQPKVKRSKS. Residue Asp-89 is modified to 3-methylthioaspartic acid.

It belongs to the universal ribosomal protein uS12 family. Part of the 30S ribosomal subunit. Contacts proteins S8 and S17. May interact with IF1 in the 30S initiation complex.

With S4 and S5 plays an important role in translational accuracy. Functionally, interacts with and stabilizes bases of the 16S rRNA that are involved in tRNA selection in the A site and with the mRNA backbone. Located at the interface of the 30S and 50S subunits, it traverses the body of the 30S subunit contacting proteins on the other side and probably holding the rRNA structure together. The combined cluster of proteins S8, S12 and S17 appears to hold together the shoulder and platform of the 30S subunit. In Ruegeria pomeroyi (strain ATCC 700808 / DSM 15171 / DSS-3) (Silicibacter pomeroyi), this protein is Small ribosomal subunit protein uS12.